The following is a 331-amino-acid chain: tRNA U34 carboxymethyltransferase (331 aa).

Carboxy-S-adenosyl-L-methionine is bound by residues K91, W105, K110, G130, 152–154, 181–182, M196, Y200, and R315; these read DPS and IE.

This sequence belongs to the class I-like SAM-binding methyltransferase superfamily. CmoB family. In terms of assembly, homotetramer.

It catalyses the reaction carboxy-S-adenosyl-L-methionine + 5-hydroxyuridine(34) in tRNA = 5-carboxymethoxyuridine(34) in tRNA + S-adenosyl-L-homocysteine + H(+). Its function is as follows. Catalyzes carboxymethyl transfer from carboxy-S-adenosyl-L-methionine (Cx-SAM) to 5-hydroxyuridine (ho5U) to form 5-carboxymethoxyuridine (cmo5U) at position 34 in tRNAs. In Shewanella baltica (strain OS185), this protein is tRNA U34 carboxymethyltransferase.